We begin with the raw amino-acid sequence, 181 residues long: uncharacterized protein (181 aa).

Over Met-1–His-14 the chain is Cytoplasmic. Residues Phe-15–Ala-35 form a helical membrane-spanning segment. The Extracellular portion of the chain corresponds to Ser-36–Val-58. The helical transmembrane segment at Leu-59–Phe-79 threads the bilayer. Residues Thr-80–Leu-84 are Cytoplasmic-facing. Residues Ser-85–Leu-105 form a helical membrane-spanning segment. Topologically, residues Glu-106–Asp-116 are extracellular. A helical membrane pass occupies residues Leu-117–Leu-137. Residues Ser-138–Ser-153 are Cytoplasmic-facing. Residues Ser-154–Gly-174 form a helical membrane-spanning segment. Residues Lys-175–Ser-181 lie on the Extracellular side of the membrane.

It is found in the membrane. This is an uncharacterized protein from Saccharomyces cerevisiae (strain ATCC 204508 / S288c) (Baker's yeast).